The sequence spans 800 residues: Endoglucanase (800 aa).

A signal peptide spans 1–30; it reads MMLRKKTKQLISSILILVLLLSLFPTALAA. Glutamate 190 (proton donor) is an active-site residue. Glutamate 305 functions as the Nucleophile in the catalytic mechanism. The segment at 761–800 is disordered; that stretch reads AATTEPVEPEPVDPGEETPPVDEKEAKTEQKEAEKEEKEE. A compositionally biased stretch (acidic residues) spans 767–780; sequence VEPEPVDPGEETPP. Basic and acidic residues predominate over residues 781–800; the sequence is VDEKEAKTEQKEAEKEEKEE.

This sequence belongs to the glycosyl hydrolase 5 (cellulase A) family.

It carries out the reaction Endohydrolysis of (1-&gt;4)-beta-D-glucosidic linkages in cellulose, lichenin and cereal beta-D-glucans.. The polypeptide is Endoglucanase (Halalkalibacter akibai (strain ATCC 43226 / DSM 21942 / CIP 109018 / JCM 9157 / 1139) (Bacillus akibai)).